The chain runs to 273 residues: Small ribosomal subunit protein uS3 (273 aa).

Positions 43–111 (IRQLMSTGME…QVQLNILEVK (69 aa)) constitute a KH type-2 domain. Low complexity predominate over residues 218–227 (QQAAAAPSRG). Positions 218–273 (QQAAAAPSRGRAGDRPGRPGGDRRRRNDRPAAEAAPAAVEAPAAEAAAPAAEGGQA) are disordered. The span at 228 to 239 (RAGDRPGRPGGD) shows a compositional bias: basic and acidic residues. The segment covering 249-273 (AEAAPAAVEAPAAEAAAPAAEGGQA) has biased composition (low complexity).

Belongs to the universal ribosomal protein uS3 family. As to quaternary structure, part of the 30S ribosomal subunit. Forms a tight complex with proteins S10 and S14.

Its function is as follows. Binds the lower part of the 30S subunit head. Binds mRNA in the 70S ribosome, positioning it for translation. This Paenarthrobacter aurescens (strain TC1) protein is Small ribosomal subunit protein uS3.